Consider the following 105-residue polypeptide: Prokineticin-1 (105 aa).

The signal sequence occupies residues 1–19 (MRGAVQVFIMLLLATVSDC). Intrachain disulfides connect Cys26–Cys38, Cys32–Cys50, Cys37–Cys78, Cys60–Cys86, and Cys80–Cys96.

Belongs to the AVIT (prokineticin) family.

The protein localises to the secreted. Potently contracts gastrointestinal (GI) smooth muscle. Induces proliferation, migration and fenestration (the formation of membrane discontinuities) in capillary endothelial cells derived from endocrine glands. Has little or no effect on a variety of other endothelial and non-endothelial cell types. Induces proliferation and differentiation, but not migration, of enteric neural crest cells. Directly influences neuroblastoma progression by promoting the proliferation and migration of neuroblastoma cells. Positively regulates PTGS2 expression and prostaglandin synthesis. May play a role in placentation. May play a role in normal and pathological testis angiogenesis. The polypeptide is Prokineticin-1 (Prok1) (Rattus norvegicus (Rat)).